The chain runs to 68 residues: Copper transport protein ATOX1 (68 aa).

Residues 1–63 (MPKHEFSVDM…TLNKTGKAVS (63 aa)) form the HMA domain. Positions 12 and 15 each coordinate Cu cation. At Ser47 the chain carries Phosphoserine. Lys60 carries the N6-acetyllysine modification.

Belongs to the ATX1 family. Homodimer. Interacts with ATP7B. Interacts with ATP7A. Interacts (via dimer form) with SLC31A1 (via C-terminal domain); this interaction improves ATOX1 stability and controls intracellular Cu(I) levels.

In terms of biological role, binds and deliver cytosolic copper to the copper ATPase proteins. May be important in cellular antioxidant defense. This chain is Copper transport protein ATOX1, found in Rattus norvegicus (Rat).